The following is a 246-amino-acid chain: UDP-N-acetyl-D-mannosaminuronic acid transferase (246 aa).

The protein belongs to the glycosyltransferase 26 family.

The catalysed reaction is UDP-N-acetyl-alpha-D-mannosaminouronate + N-acetyl-alpha-D-glucosaminyl-di-trans,octa-cis-undecaprenyl diphosphate = beta-D-ManNAcA-(1-&gt;4)-alpha-D-GlcNAc-di-trans,octa-cis-undecaprenyl diphosphate + UDP + H(+). It participates in bacterial outer membrane biogenesis; enterobacterial common antigen biosynthesis. In terms of biological role, catalyzes the synthesis of Und-PP-GlcNAc-ManNAcA (Lipid II), the second lipid-linked intermediate involved in enterobacterial common antigen (ECA) synthesis. The chain is UDP-N-acetyl-D-mannosaminuronic acid transferase from Escherichia coli (strain K12).